Reading from the N-terminus, the 274-residue chain is Glutamate--cysteine ligase regulatory subunit (274 aa).

S59 carries the phosphoserine modification. Position 263 is an N6-acetyllysine (K263).

The protein belongs to the aldo/keto reductase family. Glutamate--cysteine ligase light chain subfamily. Heterodimer of a catalytic heavy chain and a regulatory light chain. Most abundant in kidney. Also found in liver and testis.

It participates in sulfur metabolism; glutathione biosynthesis; glutathione from L-cysteine and L-glutamate: step 1/2. This Rattus norvegicus (Rat) protein is Glutamate--cysteine ligase regulatory subunit (Gclm).